Reading from the N-terminus, the 577-residue chain is Myb-like protein N (577 aa).

3 disordered regions span residues 1 to 23 (MMTI…NIYT), 206 to 225 (TPFS…SPLN), and 240 to 264 (SSSS…LSSS). Positions 213 to 225 (PNSPNSTSSSPLN) are enriched in low complexity. HTH myb-type domains follow at residues 403 to 465 (KKST…CPAI) and 466 to 517 (RKGS…SREV). DNA-binding regions (H-T-H motif) lie at residues 437 to 461 (WKKI…KRVL) and 489 to 513 (WKNV…KSCM). Residues 518 to 570 (PWTPKEDEILQKKVIENKQDSTKEIGWMDLSKAMARARQTKIPRTALECKIRF) form the Myb-like domain.

The protein localises to the nucleus. This chain is Myb-like protein N (mybN), found in Dictyostelium discoideum (Social amoeba).